Consider the following 526-residue polypeptide: Methane monooxygenase component A alpha chain (526 aa).

Fe cation is bound by residues Glu-114, Glu-144, and His-147. Residue Cys-151 is part of the active site. Residues Glu-209, Glu-243, and His-246 each contribute to the Fe cation site.

It belongs to the TmoA/XamoA family. M.trichosporium has two forms of methane monooxygenase, a soluble and a membrane-bound type. The soluble type consists of four components (A to D): protein A, comprising three chains, in an alpha-2, beta-2, gamma-2 configuration, is a nonheme iron protein containing an unusual mu-hydroxo bridge structure at its active site and interacts with both oxygen and methane. Requires Fe cation as cofactor.

It catalyses the reaction methane + NADH + O2 + H(+) = methanol + NAD(+) + H2O. The enzyme catalyses methane + NADPH + O2 + H(+) = methanol + NADP(+) + H2O. In terms of biological role, responsible for the initial oxygenation of methane to methanol in methanotrophs. It also catalyzes the monohydroxylation of a variety of unactivated alkenes, alicyclic, aromatic and heterocyclic compounds. The sequence is that of Methane monooxygenase component A alpha chain (mmoX) from Methylosinus trichosporium.